The sequence spans 269 residues: Glutamate racemase (269 aa).

Residues aspartate 14–serine 15 and tyrosine 46–serine 47 contribute to the substrate site. The active-site Proton donor/acceptor is the cysteine 78. Asparagine 79 to threonine 80 is a binding site for substrate. Cysteine 189 functions as the Proton donor/acceptor in the catalytic mechanism. Threonine 190–histidine 191 lines the substrate pocket.

The protein belongs to the aspartate/glutamate racemases family.

The enzyme catalyses L-glutamate = D-glutamate. It functions in the pathway cell wall biogenesis; peptidoglycan biosynthesis. Its function is as follows. Provides the (R)-glutamate required for cell wall biosynthesis. This Haemophilus influenzae (strain ATCC 51907 / DSM 11121 / KW20 / Rd) protein is Glutamate racemase.